The primary structure comprises 287 residues: Serine/arginine-rich SC35-like splicing factor SCL33 (287 aa).

A disordered region spans residues 1–34 (MRGRSYTPSPPRGYGRRGRSPSPRGRYGGRSRDL). Phosphoserine occurs at positions 9 and 20. The RRM domain maps to 36-114 (TSLLVRNLRH…RELTVVFAEE (79 aa)). Positions 116 to 132 (RKKPTEMRARERGGGRF) are enriched in basic and acidic residues. Residues 116–287 (RKKPTEMRAR…QYDEDRSPSQ (172 aa)) are disordered. Residues S165, S175, S177, S188, and S190 each carry the phosphoserine modification. A compositionally biased stretch (basic and acidic residues) spans 177–187 (SPREERYDGRR). Over residues 220–237 (SISRSPRRSRSPSPKRNR) the composition is skewed to basic residues. A phosphoserine mark is found at S238, S248, S271, S284, and S286. A compositionally biased stretch (basic residues) spans 244-260 (SISRSPRRSRSPRRSRR). Positions 278 to 287 (QYDEDRSPSQ) are enriched in basic and acidic residues.

It belongs to the splicing factor SR family. SCL subfamily. As to quaternary structure, component of the spliceosome. Homodimer. Interacts with AFC2, CYP59, RS2Z33, RNU1 and SR45. The interaction with AFC2 depends on phosphorylation status. Phosphorylated by AFC2. Ubiquitous. Mostly expressed in roots, fruits and flowers, and, to a lower extent, in leaves.

The protein resides in the nucleus speckle. The protein localises to the nucleus. Its subcellular location is the nucleoplasm. It is found in the cytoplasm. Functionally, involved in intron recognition and spliceosome assembly. Binds to multiple 5'-GAAG-3' repeats found in its third intron, suggesting autoregulation of alternative splicing. May be necessary for accurate splicing of the 3' region of introns. The polypeptide is Serine/arginine-rich SC35-like splicing factor SCL33 (SCL33) (Arabidopsis thaliana (Mouse-ear cress)).